A 1274-amino-acid chain; its full sequence is Mediator of RNA polymerase II transcription subunit 14 (1274 aa).

Disordered stretches follow at residues 1 to 40 (MENG…KAHA), 1056 to 1142 (LVGT…LHTQ), and 1155 to 1274 (AQRQ…VVID). Positions 27–37 (AKREGSPDKGK) are enriched in basic and acidic residues. Polar residues predominate over residues 1075 to 1085 (QDLQQGPQKTP). Low complexity predominate over residues 1090–1104 (AAQAAQAAQAAQAAQ). Residues 1108–1119 (PQRPKQQPPTPS) show a composition bias toward pro residues. Composition is skewed to low complexity over residues 1120–1142 (QPQQ…LHTQ), 1155–1172 (AQRQ…NNNT), and 1183–1252 (PQQR…PQGQ). Gly residues predominate over residues 1253 to 1265 (PGHGGGANGGMGG).

Belongs to the Mediator complex subunit 14 family. As to quaternary structure, component of the Mediator complex.

The protein resides in the nucleus. Functionally, component of the Mediator complex, a coactivator involved in the regulated transcription of nearly all RNA polymerase II-dependent genes. Mediator functions as a bridge to convey information from gene-specific regulatory proteins to the basal RNA polymerase II transcription machinery. Mediator is recruited to promoters by direct interactions with regulatory proteins and serves as a scaffold for the assembly of a functional preinitiation complex with RNA polymerase II and the general transcription factors. The sequence is that of Mediator of RNA polymerase II transcription subunit 14 (rgr1) from Neurospora crassa (strain ATCC 24698 / 74-OR23-1A / CBS 708.71 / DSM 1257 / FGSC 987).